Here is a 109-residue protein sequence, read N- to C-terminus: Small ribosomal subunit protein uS10c (109 aa).

It belongs to the universal ribosomal protein uS10 family. Part of the 30S ribosomal subunit.

It localises to the plastid. Its subcellular location is the chloroplast. Functionally, involved in the binding of tRNA to the ribosomes. This Cyanidium caldarium (Red alga) protein is Small ribosomal subunit protein uS10c.